The chain runs to 964 residues: Protein translocase subunit SecA (964 aa).

Residues Gln86, 104-108 (GEGKT), and Asp494 contribute to the ATP site. The tract at residues 846-964 (ETAESADTIA…YKMCHGQNEA (119 aa)) is disordered. A compositionally biased stretch (acidic residues) spans 871–882 (AEGEVEEEDEDT). Low complexity predominate over residues 887 to 900 (AIAESAAASEAGES). Positions 947, 949, 958, and 959 each coordinate Zn(2+).

The protein belongs to the SecA family. As to quaternary structure, monomer and homodimer. Part of the essential Sec protein translocation apparatus which comprises SecA, SecYEG and auxiliary proteins SecDF. Other proteins may also be involved. Zn(2+) serves as cofactor.

The protein resides in the cell membrane. The protein localises to the cytoplasm. It carries out the reaction ATP + H2O + cellular proteinSide 1 = ADP + phosphate + cellular proteinSide 2.. Its function is as follows. Part of the Sec protein translocase complex. Interacts with the SecYEG preprotein conducting channel. Has a central role in coupling the hydrolysis of ATP to the transfer of proteins into and across the cell membrane, serving as an ATP-driven molecular motor driving the stepwise translocation of polypeptide chains across the membrane. The chain is Protein translocase subunit SecA from Bifidobacterium longum subsp. infantis (strain ATCC 15697 / DSM 20088 / JCM 1222 / NCTC 11817 / S12).